We begin with the raw amino-acid sequence, 408 residues long: Ribonuclease T2-like (408 aa).

An N-terminal signal peptide occupies residues 1–25 (MLQSIPGPQHILKALTGSLGLSTIF). 4 cysteine pairs are disulfide-bonded: cysteine 38-cysteine 56, cysteine 45-cysteine 92, cysteine 55-cysteine 158, and cysteine 100-cysteine 150. The active site involves histidine 85. Asparagine 108 carries an N-linked (GlcNAc...) asparagine glycan. Active-site residues include glutamate 143 and histidine 147. Residue asparagine 173 is glycosylated (N-linked (GlcNAc...) asparagine). A disulfide bridge links cysteine 222 with cysteine 257. A disordered region spans residues 268-292 (KHREPSRTTDTPSQPTTTGTPFKGR). A compositionally biased stretch (low complexity) spans 275–288 (TTDTPSQPTTTGTP). The N-linked (GlcNAc...) asparagine glycan is linked to asparagine 372.

It belongs to the RNase T2 family.

The protein resides in the vacuole lumen. The protein localises to the cytoplasm. The enzyme catalyses a ribonucleotidyl-ribonucleotide-RNA + H2O = a 3'-end 3'-phospho-ribonucleotide-RNA + a 5'-end dephospho-ribonucleoside-RNA + H(+). Rnase which modulates cell survival under stress conditions. Released from the vacuole to the cytoplasm during stress to promote tRNA and rRNA cleavage and to activate separately a downstream pathway that promotes cell death. Involved in cell size, vacuolar morphology and growth at high temperatures and high salt concentration. The polypeptide is Ribonuclease T2-like (rny1) (Aspergillus fumigatus (strain ATCC MYA-4609 / CBS 101355 / FGSC A1100 / Af293) (Neosartorya fumigata)).